The sequence spans 155 residues: uncharacterized protein (155 aa).

5 consecutive transmembrane segments (helical) span residues 4–24 (IVGA…AGYL), 46–66 (AIGI…AIVY), 77–97 (FWFT…FQFT), 101–121 (LLAA…LLII), and 130–150 (SYLL…SFTI).

Belongs to the TspO/BZRP family.

It localises to the cell membrane. This is an uncharacterized protein from Bacillus subtilis (strain 168).